The sequence spans 639 residues: Chaperone protein DnaK (639 aa).

Residue Thr198 is modified to Phosphothreonine; by autocatalysis. The interval 602–639 (QAKSQAQGGDNADAGKQANATADDVVDAEFEEVKDDKK) is disordered. The span at 625–639 (DVVDAEFEEVKDDKK) shows a compositional bias: acidic residues.

It belongs to the heat shock protein 70 family.

Its function is as follows. Acts as a chaperone. The polypeptide is Chaperone protein DnaK (Shewanella baltica (strain OS155 / ATCC BAA-1091)).